A 194-amino-acid chain; its full sequence is Ion-translocating oxidoreductase complex subunit B (194 aa).

The hydrophobic stretch occupies residues 1 to 26; that stretch reads MSSILIAVIAIAALALVFGLILGFAS. The 4Fe-4S domain maps to 32–90; that stretch reads ESDPIVEQIDAILPQTQCGQCGYPGCKPYAEAIANGDMINKCPPGGQATIEKLADLMGV. [4Fe-4S] cluster is bound by residues cysteine 49, cysteine 52, cysteine 57, cysteine 73, cysteine 114, cysteine 117, cysteine 120, cysteine 124, cysteine 144, cysteine 147, cysteine 150, and cysteine 154. 2 4Fe-4S ferredoxin-type domains span residues 105-134 and 135-164; these read KVAF…GGTK and ALHT…MIPV.

It belongs to the 4Fe4S bacterial-type ferredoxin family. RnfB subfamily. In terms of assembly, the complex is composed of six subunits: RnfA, RnfB, RnfC, RnfD, RnfE and RnfG. It depends on [4Fe-4S] cluster as a cofactor.

The protein localises to the cell inner membrane. Functionally, part of a membrane-bound complex that couples electron transfer with translocation of ions across the membrane. This chain is Ion-translocating oxidoreductase complex subunit B, found in Aliivibrio fischeri (strain ATCC 700601 / ES114) (Vibrio fischeri).